Here is a 238-residue protein sequence, read N- to C-terminus: MVHQLIAEFMGTALMIIFGVGVHCSSVLKGTKYRGSGHIFAITTWGFGISVALFIFGNVCINPAMVLAQCLLGNIAWSLFIPYSVAEVLGGVVGSVIVWIMYADHFKASTDEISPITIRNLFCTAPAVRNLPRNFFVELFDTFIFISGILAISEIKTPGIVPIGVGLLVWAIGMGLGGPTGFAMNLARDMGPRIAHAILPIANKADSDWQYGIIVPGIAPFVGAAIAAWFMHGFFGIN.

Transmembrane regions (helical) follow at residues 2–22 and 39–59; these read VHQL…GVGV and IFAI…FGNV. An NPA 1 motif is present at residues 62–64; sequence NPA. The next 3 helical transmembrane spans lie at 80–100, 135–155, and 158–178; these read FIPY…IVWI, FFVE…ISEI, and PGIV…GLGG. The short motif at 185–187 is the NPA 2 element; it reads NLA. The chain crosses the membrane as a helical span at residues 211-231; that stretch reads YGIIVPGIAPFVGAAIAAWFM.

Belongs to the MIP/aquaporin (TC 1.A.8) family.

The protein resides in the cell membrane. Its function is as follows. Transporter that facilitates the transmembrane diffusion of D/L-lactic acid. Is involved in the cellular racemization of lactate and lactate metabolism. The transported molecule is indeed lactic acid and not the lactate anion, in agreement with the assumption that, with very few exceptions, MIPs (major intrinsic proteins) only facilitate the transport of uncharged solutes. Also facilitates urea and H(2)O(2) diffusion across membranes, but is not permeable to water, glycerol and dihydroxyacetone. The protein is D/L-lactic acid transporter of Lactiplantibacillus plantarum (strain ATCC BAA-793 / NCIMB 8826 / WCFS1) (Lactobacillus plantarum).